Here is a 278-residue protein sequence, read N- to C-terminus: Putative ABC transporter ATP-binding protein MJ1572 (278 aa).

An ABC transporter domain is found at 5-242 (YRLVDVSYKY…LDELNLDVPE (238 aa)). 38 to 45 (GPNGAGKT) contributes to the ATP binding site.

It belongs to the ABC transporter superfamily.

The protein localises to the cell membrane. Functionally, probably part of an ABC transporter complex. Responsible for energy coupling to the transport system. This chain is Putative ABC transporter ATP-binding protein MJ1572, found in Methanocaldococcus jannaschii (strain ATCC 43067 / DSM 2661 / JAL-1 / JCM 10045 / NBRC 100440) (Methanococcus jannaschii).